The primary structure comprises 594 residues: DNA polymerase epsilon subunit B (594 aa).

This sequence belongs to the DNA polymerase epsilon subunit B family. As to quaternary structure, heterotetramer. Consists of four subunits: pol2, dpb2, dpb3 and dpb4. Interacts with dpb3.

It localises to the nucleus. Its function is as follows. As accessory component of the DNA polymerase epsilon (DNA polymerase II) participates in chromosomal DNA replication. In Schizosaccharomyces pombe (strain 972 / ATCC 24843) (Fission yeast), this protein is DNA polymerase epsilon subunit B (dpb2).